A 394-amino-acid polypeptide reads, in one-letter code: MAQEAGDMDDGQVSDSDSDMTVAPSDRPLPVPKALGGDCGLRPFQSTATACAPASHYRTVKSVDSSEESFSDSDDDSSVWKRKRQKCFNTPPKPEPFQFDQSSQKPPIAGRKKVNNIWSAVLQEQNQDAVATELGILGMEGTIDRSRQSETYNYLLAKKLKRESQEHTKELDKELEEYMHGGKKTGPKEEENGQGHPKRKRPVKDRVGDRLEMNYKGRYEITEDDSQERVADEISFRLQEPKKDLIARVVRIIGNKKAIELLMETAEVEQNGGLFIMNGSRRRTPGGVFLNLLKNTPSISEEQIKDIFYLENQKEYENKKAARKRRIQVMGKKMKQAIKNLNFQEDDDTSRETFASDTNEALASLDESQEGHGETKLDAEEAIEVDHSHDLDMF.

2 stretches are compositionally biased toward acidic residues: residues 1–18 (MAQEAGDMDDGQVSDSDS) and 65–77 (SSEESFSDSDDDS). The interval 1–109 (MAQEAGDMDD…DQSSQKPPIA (109 aa)) is disordered. Ala2 carries the post-translational modification N-acetylalanine. Residues 2-329 (AQEAGDMDDG…KAARKRRIQV (328 aa)) are necessary for interaction with CBP80. Phosphoserine is present on residues Ser14, Ser16, Ser65, Ser66, Ser69, and Ser73. The Nuclear localization signal motif lies at 81-84 (KRKR). Positions 130-139 (VATELGILGM) match the Nuclear export signal motif. The segment covering 178-193 (YMHGGKKTGPKEEENG) has biased composition (basic and acidic residues). The disordered stretch occupies residues 178–208 (YMHGGKKTGPKEEENGQGHPKRKRPVKDRVG). Residues 198 to 201 (KRKR) carry the Nuclear localization signal motif. At Ser226 the chain carries Phosphoserine. The interval 228–328 (ERVADEISFR…KKAARKRRIQ (101 aa)) is sufficient for poly U RNA-binding. The necessary for poly U RNA-binding and snRNA export stretch occupies residues 279–287 (GSRRRTPGG). Thr296 carries the phosphothreonine modification. Phosphoserine is present on residues Ser356 and Ser368. The tract at residues 365–394 (LDESQEGHGETKLDAEEAIEVDHSHDLDMF) is disordered. Residues 369–394 (QEGHGETKLDAEEAIEVDHSHDLDMF) are compositionally biased toward basic and acidic residues.

Belongs to the PHAX family. As to quaternary structure, found in a U snRNA export complex with PHAX/RNUXA, NCBP1/CBP80, NCBP2/CBP20, RAN, XPO1 and m7G-capped RNA. Part of a precomplex with PHAX/RNUXA, NCBP1/CBP80, NCBP2/CBP20 and m7G-capped RNA. Interacts with NCBP1/CBP80. Found in a complex with snoRNA, Interacts with NCBP2/CBP20. Interacts with DDX39A; this interaction stimulates PHAX RNA binding activity. Post-translationally, phosphorylated in the nucleus. Dephosphorylated in the cytoplasm.

The protein localises to the nucleus. Its subcellular location is the nucleoplasm. The protein resides in the cajal body. It localises to the cytoplasm. Functionally, a phosphoprotein adapter involved in the XPO1-mediated U snRNA export from the nucleus. Bridge components required for U snRNA export, the cap binding complex (CBC)-bound snRNA on the one hand and the GTPase Ran in its active GTP-bound form together with the export receptor XPO1 on the other. Its phosphorylation in the nucleus is required for U snRNA export complex assembly and export, while its dephosphorylation in the cytoplasm causes export complex disassembly. It is recycled back to the nucleus via the importin alpha/beta heterodimeric import receptor. The directionality of nuclear export is thought to be conferred by an asymmetric distribution of the GTP- and GDP-bound forms of Ran between the cytoplasm and nucleus. Its compartmentalized phosphorylation cycle may also contribute to the directionality of export. Binds strongly to m7G-capped U1 and U5 small nuclear RNAs (snRNAs) in a sequence-unspecific manner and phosphorylation-independent manner. Also plays a role in the biogenesis of U3 small nucleolar RNA (snoRNA). Involved in the U3 snoRNA transport from nucleoplasm to Cajal bodies. Binds strongly to m7G-capped U3, U8 and U13 precursor snoRNAs and weakly to trimethylated (TMG)-capped U3, U8 and U13 snoRNAs. Also binds to telomerase RNA. This is Phosphorylated adapter RNA export protein (PHAX) from Bos taurus (Bovine).